A 58-amino-acid polypeptide reads, in one-letter code: Large ribosomal subunit protein uL30 (58 aa).

It belongs to the universal ribosomal protein uL30 family. Part of the 50S ribosomal subunit.

This Vibrio vulnificus (strain CMCP6) protein is Large ribosomal subunit protein uL30.